We begin with the raw amino-acid sequence, 979 residues long: Glycine dehydrogenase (decarboxylating) (979 aa).

N6-(pyridoxal phosphate)lysine is present on Lys726.

Belongs to the GcvP family. The glycine cleavage system is composed of four proteins: P, T, L and H. Requires pyridoxal 5'-phosphate as cofactor.

It catalyses the reaction N(6)-[(R)-lipoyl]-L-lysyl-[glycine-cleavage complex H protein] + glycine + H(+) = N(6)-[(R)-S(8)-aminomethyldihydrolipoyl]-L-lysyl-[glycine-cleavage complex H protein] + CO2. Functionally, the glycine cleavage system catalyzes the degradation of glycine. The P protein binds the alpha-amino group of glycine through its pyridoxal phosphate cofactor; CO(2) is released and the remaining methylamine moiety is then transferred to the lipoamide cofactor of the H protein. The sequence is that of Glycine dehydrogenase (decarboxylating) from Ralstonia pickettii (strain 12J).